The primary structure comprises 171 residues: Large ribosomal subunit protein bL9 (171 aa).

It belongs to the bacterial ribosomal protein bL9 family.

Binds to the 23S rRNA. The chain is Large ribosomal subunit protein bL9 from Rickettsia conorii (strain ATCC VR-613 / Malish 7).